We begin with the raw amino-acid sequence, 96 residues long: Co-chaperonin GroES (96 aa).

Belongs to the GroES chaperonin family. Heptamer of 7 subunits arranged in a ring. Interacts with the chaperonin GroEL.

It is found in the cytoplasm. Together with the chaperonin GroEL, plays an essential role in assisting protein folding. The GroEL-GroES system forms a nano-cage that allows encapsulation of the non-native substrate proteins and provides a physical environment optimized to promote and accelerate protein folding. GroES binds to the apical surface of the GroEL ring, thereby capping the opening of the GroEL channel. This is Co-chaperonin GroES from Neisseria gonorrhoeae (strain ATCC 700825 / FA 1090).